The sequence spans 524 residues: MSRDSLFVAGFVDISTCPKEDPSLNLDAQTWSRYLPLSTSIPLTVEHFSEAQVGWVTGLFSVAQGLFCTAVITAGEFLELLDSLYLECTVAQHSPKADLPRNPRAEVLHSWLPELSLSSVHPDLLGTKDEPGQVFHHISLCALGRRRGTVAVYGDSLAWVLSRFQSLSRDDVAMIATNALTPPSQAPEFTVKLGLLFAKAIDAGFISNRISTLKLDRQAAGISPATYLKASAVPQKLETAAPLNQPEGADTLIDSTMSGPGAPPAPQDDLIPVPRSAFLNMLESTVSRTHPANGDAPALLPFGRYNMVQVPKGLTPYVRPVGFIEPSDQDDYRYPSYTGPRPYDYFAPRQLCRNCCTSRPRKRAREDPEDEVSFPGEESTVFRKDLTDLSKSLAELQSEIRELKQMQNTPRPYPRPEHHYPAFDPLMYGLRPLPNPDKFPKEFICSDYFTKDESASKKPEVVHIPNPEQHVPACAAQPEVKLVEEKDVAPKQPRVVNASFQPKAETSKAATLQKLFCDEMLSKQ.

Residues His-47, Ser-116, and His-137 each act as charge relay system in the active site. Residues Asp-268 to Ser-287 form an interaction with pAP region. The Nuclear localization signal motif lies at Arg-359–Arg-365. A disordered region spans residues Arg-359–Glu-378. The segment at Ala-504–Gln-524 is interaction with major capsid protein.

The protein belongs to the herpesviridae capsid scaffolding protein family. In terms of assembly, homomultimer. Interacts with major capsid protein. Exists in a monomer-dimer equilibrium with the dimer being the active species. In terms of processing, capsid scaffolding protein is cleaved by assemblin after formation of the spherical procapsid. As a result, the capsid obtains its mature, icosahedral shape. Cleavages occur at two or more sites: release (R-site) and maturation (M-site).

Its subcellular location is the host cytoplasm. It localises to the host nucleus. It carries out the reaction Cleaves -Ala-|-Ser- and -Ala-|-Ala- bonds in the scaffold protein.. Its function is as follows. Acts as a scaffold protein by binding major capsid protein in the cytoplasm, inducing the nuclear localization of both proteins. Multimerizes in the nucleus such as major capsid protein forms the icosahedral T=16 capsid. Autocatalytic cleavage releases the assembly protein, and subsequently abolishes interaction with major capsid protein. Cleavages products are evicted from the capsid before or during DNA packaging. Functionally, protease that plays an essential role in virion assembly within the nucleus. Catalyzes the cleavage of the assembly protein after formation of the spherical procapsid. By that cleavage, the capsid matures and gains its icosahedral shape. The cleavage sites seem to include -Ala-Ser-, -Ala-Ala-, as well as Ala-Thr bonds. Assemblin and cleavages products are evicted from the capsid before or during DNA packaging. In terms of biological role, plays a major role in capsid assembly. Acts as a scaffold protein by binding major capsid protein. Multimerizes in the nucleus such as major capsid protein forms the icosahedral T=16 capsid. Cleaved by assemblin after capsid completion. The cleavages products are evicted from the capsid before or during DNA packaging. The sequence is that of Capsid scaffolding protein (17) from Connochaetes taurinus (Blue wildebeest).